The sequence spans 158 residues: MVPKLFTSQICVLLLFGLLSVEVSLQVKPQQFSWAQWFSIQHIQTTPLHCTSAMRAINRYQPRCKNQNTFLHTTFANVVNVCGNTNITCPRNASLNNCHHSGVQVPLTYCNLTGPQTISNCVYSSTQANMFYVVACDNRDPRDPPQYPVVPVHLDTTI.

The first 27 residues, 1 to 27 (MVPKLFTSQICVLLLFGLLSVEVSLQV), serve as a signal peptide directing secretion. The C-linked (Man) tryptophan glycan is linked to Trp-34. His-42 acts as the Proton acceptor in catalysis. Cystine bridges form between Cys-50–Cys-110, Cys-64–Cys-121, Cys-82–Cys-136, and Cys-89–Cys-98. The residue at position 60 (Tyr-60) is a 3'-nitrotyrosine. 65-69 (KNQNT) serves as a coordination point for substrate. Asn-86, Asn-92, and Asn-111 each carry an N-linked (GlcNAc...) asparagine glycan. The active-site Proton donor is His-153.

The protein belongs to the pancreatic ribonuclease family. In terms of assembly, interacts with and forms a tight 1:1 complex with RNH1. Dimerization of two such complexes may occur.

It localises to the lysosome. It is found in the cytoplasmic granule. It carries out the reaction an [RNA] containing cytidine + H2O = an [RNA]-3'-cytidine-3'-phosphate + a 5'-hydroxy-ribonucleotide-3'-[RNA].. The enzyme catalyses an [RNA] containing uridine + H2O = an [RNA]-3'-uridine-3'-phosphate + a 5'-hydroxy-ribonucleotide-3'-[RNA].. In terms of biological role, this is a non-secretory ribonuclease. It is a pyrimidine specific nuclease with a slight preference for U. Cytotoxin and helminthotoxin. Possesses a wide variety of biological activities. This chain is Non-secretory ribonuclease (RNASE2), found in Saguinus oedipus (Cotton-top tamarin).